Consider the following 707-residue polypeptide: DNA ligase (707 aa).

Residues aspartate 48–aspartate 52, serine 97–isoleucine 98, and glutamate 134 contribute to the NAD(+) site. The active-site N6-AMP-lysine intermediate is the lysine 136. Positions 157, 193, 320, and 344 each coordinate NAD(+). Residues cysteine 438, cysteine 441, cysteine 456, and cysteine 462 each contribute to the Zn(2+) site. The region spanning valine 621–alanine 707 is the BRCT domain.

This sequence belongs to the NAD-dependent DNA ligase family. LigA subfamily. It depends on Mg(2+) as a cofactor. Requires Mn(2+) as cofactor.

It catalyses the reaction NAD(+) + (deoxyribonucleotide)n-3'-hydroxyl + 5'-phospho-(deoxyribonucleotide)m = (deoxyribonucleotide)n+m + AMP + beta-nicotinamide D-nucleotide.. Functionally, DNA ligase that catalyzes the formation of phosphodiester linkages between 5'-phosphoryl and 3'-hydroxyl groups in double-stranded DNA using NAD as a coenzyme and as the energy source for the reaction. It is essential for DNA replication and repair of damaged DNA. This chain is DNA ligase, found in Polaromonas naphthalenivorans (strain CJ2).